We begin with the raw amino-acid sequence, 477 residues long: Ribulose bisphosphate carboxylase large chain (477 aa).

Positions 1–2 (MS) are excised as a propeptide. N-acetylproline is present on Pro3. Asn123 and Thr173 together coordinate substrate. Lys175 serves as the catalytic Proton acceptor. Substrate is bound at residue Lys177. Lys201, Asp203, and Glu204 together coordinate Mg(2+). The residue at position 201 (Lys201) is an N6-carboxylysine. The active-site Proton acceptor is the His294. Substrate-binding residues include Arg295, His327, and Ser379.

Belongs to the RuBisCO large chain family. Type I subfamily. In terms of assembly, heterohexadecamer of 8 large chains and 8 small chains; disulfide-linked. The disulfide link is formed within the large subunit homodimers. Requires Mg(2+) as cofactor. In terms of processing, the disulfide bond which can form between Cys-247 in the large chain dimeric partners within the hexadecamer appears to be associated with oxidative stress and protein turnover.

The protein resides in the plastid. It localises to the chloroplast. The enzyme catalyses 2 (2R)-3-phosphoglycerate + 2 H(+) = D-ribulose 1,5-bisphosphate + CO2 + H2O. It carries out the reaction D-ribulose 1,5-bisphosphate + O2 = 2-phosphoglycolate + (2R)-3-phosphoglycerate + 2 H(+). Functionally, ruBisCO catalyzes two reactions: the carboxylation of D-ribulose 1,5-bisphosphate, the primary event in carbon dioxide fixation, as well as the oxidative fragmentation of the pentose substrate in the photorespiration process. Both reactions occur simultaneously and in competition at the same active site. This is Ribulose bisphosphate carboxylase large chain (rbcL) from Triticum aestivum (Wheat).